We begin with the raw amino-acid sequence, 306 residues long: Ribonuclease BN (306 aa).

Residues His64, His66, Asp68, His69, His141, Asp212, and His270 each coordinate Zn(2+). The active-site Proton acceptor is the Asp68.

It belongs to the RNase Z family. RNase BN subfamily. As to quaternary structure, homodimer. Requires Zn(2+) as cofactor.

Its function is as follows. Zinc phosphodiesterase, which has both exoribonuclease and endoribonuclease activities. The sequence is that of Ribonuclease BN from Klebsiella pneumoniae (strain 342).